The following is a 213-amino-acid chain: ATP phosphoribosyltransferase (213 aa).

It belongs to the ATP phosphoribosyltransferase family. Short subfamily. In terms of assembly, heteromultimer composed of HisG and HisZ subunits.

It is found in the cytoplasm. It carries out the reaction 1-(5-phospho-beta-D-ribosyl)-ATP + diphosphate = 5-phospho-alpha-D-ribose 1-diphosphate + ATP. Its pathway is amino-acid biosynthesis; L-histidine biosynthesis; L-histidine from 5-phospho-alpha-D-ribose 1-diphosphate: step 1/9. In terms of biological role, catalyzes the condensation of ATP and 5-phosphoribose 1-diphosphate to form N'-(5'-phosphoribosyl)-ATP (PR-ATP). Has a crucial role in the pathway because the rate of histidine biosynthesis seems to be controlled primarily by regulation of HisG enzymatic activity. The polypeptide is ATP phosphoribosyltransferase (Thermoanaerobacter pseudethanolicus (strain ATCC 33223 / 39E) (Clostridium thermohydrosulfuricum)).